The sequence spans 79 residues: Sulfur carrier protein TusA (79 aa).

The Cysteine persulfide intermediate role is filled by Cys17.

Belongs to the sulfur carrier protein TusA family.

It localises to the cytoplasm. Its function is as follows. Sulfur carrier protein which probably makes part of a sulfur-relay system. The polypeptide is Sulfur carrier protein TusA (Haemophilus influenzae (strain PittEE)).